A 329-amino-acid polypeptide reads, in one-letter code: MEFNDMTSDITGGVKEYDIATNGISLHVTEQGAGPAVLFCHGFPDTSYTWRRQMNAIASAGYRAIAPDMRGYGRSSAPADASLYTPLHTTGDLIGLLDALKISSAVLVGHDWGATHAWNAALMRPDRFKAVFGLSVPFVTRGESSVFERMRESGRQDDFYMFEQIRPDADQIWADAAVTIPGILYWASGSAPEGEQWSPLDRTRSLYRAAPGPLPSWAEADYVAHNIAEFRRTGFHGGLNYYRAAEPYFTLSAPWKGAKITQPSFFIWGKSDGLKELYPFTLQQMRAGLPGLMGGLELDNVGHWVQHEASAEVSEQLVRFLRTVDAVLS.

One can recognise an AB hydrolase-1 domain in the interval 35 to 308 (PAVLFCHGFP…DNVGHWVQHE (274 aa)). The active-site Nucleophile is the aspartate 111. Residue tyrosine 242 is the Proton donor of the active site. Catalysis depends on histidine 303, which acts as the Proton acceptor.

This sequence belongs to the AB hydrolase superfamily. Epoxide hydrolase family. Homodimer.

The catalysed reaction is an epoxide + H2O = an ethanediol. It carries out the reaction (R)-styrene oxide + H2O = (R)-styrene glycol. The enzyme catalyses (S)-styrene oxide + H2O = (S)-styrene glycol. It catalyses the reaction 3,4-epoxy-1-cyclohexene + H2O = cyclohex-3-ene-1,2-diol. Its function is as follows. Catalyzes the hydrolysis of various epoxides into diols. In vitro, shows the strongest activity toward aromatic and cyclic aliphatic epoxide compounds, since it shows strong activity toward (R)-styrene oxide, (S)-styrene oxide, and 3,4-epoxy-1-cyclohexene, but very weak activity toward (R)-epichlorohydrin, (S)-epichlorohydrin, and 1,2-epoxy-9-decene. This Caballeronia sordidicola (Burkholderia sordidicola) protein is Epoxide hydrolase.